A 451-amino-acid polypeptide reads, in one-letter code: Phosphoglucosamine mutase (451 aa).

Residue S101 is the Phosphoserine intermediate of the active site. S101, D240, D242, and D244 together coordinate Mg(2+). Residue S101 is modified to Phosphoserine.

Belongs to the phosphohexose mutase family. Requires Mg(2+) as cofactor. In terms of processing, activated by phosphorylation.

The enzyme catalyses alpha-D-glucosamine 1-phosphate = D-glucosamine 6-phosphate. Catalyzes the conversion of glucosamine-6-phosphate to glucosamine-1-phosphate. This is Phosphoglucosamine mutase from Streptococcus pyogenes serotype M2 (strain MGAS10270).